Consider the following 235-residue polypeptide: Transcriptional regulatory protein WalR (235 aa).

A Response regulatory domain is found at lysine 4–leucine 117. At aspartate 53 the chain carries 4-aspartylphosphate. The segment at residues serine 132–asparagine 231 is a DNA-binding region (ompR/PhoB-type).

Homodimer. In terms of processing, phosphorylated by WalK.

It localises to the cytoplasm. Functionally, member of the two-component regulatory system WalK/WalR involved in the regulation of the ftsAZ operon, the yocH, ykvT, cwlO, lytE, ydjM, yjeA, yoeB genes and the tagAB and tagDEF operons. Binds to the ftsAZ P1 promoter sequence in vitro. WalR has been shown to directly bind to the regulatory regions of yocH, ykvT, tagAB/tagDEF. Activates cwlO, lytE and ydjM and represses yoeB and yjeA. The polypeptide is Transcriptional regulatory protein WalR (Bacillus subtilis (strain 168)).